A 23-amino-acid polypeptide reads, in one-letter code: Acidic phospholipase A2 Ts-A2 (23 aa).

The cofactor is Ca(2+). In terms of processing, contains 7 disulfide bonds. Expressed by the venom gland.

It localises to the secreted. The catalysed reaction is a 1,2-diacyl-sn-glycero-3-phosphocholine + H2O = a 1-acyl-sn-glycero-3-phosphocholine + a fatty acid + H(+). Its function is as follows. Exhibits moderate hydrolytic activities and prefers the anionic micelles (dPPC with deoxycholate) to the zwitterionic micelles (dPPC with Triton X-100). PLA2 catalyzes the calcium-dependent hydrolysis of the 2-acyl groups in 3-sn-phosphoglycerides. This chain is Acidic phospholipase A2 Ts-A2, found in Trimeresurus stejnegeri (Chinese green tree viper).